A 147-amino-acid polypeptide reads, in one-letter code: Small ribosomal subunit protein uS9 (147 aa).

Positions 128–147 (KERKKYGQMGARAKYRWSKR) are disordered.

This sequence belongs to the universal ribosomal protein uS9 family.

The polypeptide is Small ribosomal subunit protein uS9 (rpsI) (Aquifex aeolicus (strain VF5)).